A 687-amino-acid chain; its full sequence is MIRQSTLKNFAIKRCFQHIAYRNTPAMRSVALAQRFYSSSSRYYSASPLPASKRPEPAPSFNVDPLEQPAEPSKLAKKLRAEPDMDTSFVGLTGGQIFNEMMSRQNVDTVFGYPGGAILPVYDAIHNSDKFNFVLPKHEQGAGHMAEGYARASGKPGVVLVTSGPGATNVVTPMADAFADGIPMVVFTGQVPTSAIGTDAFQEADVVGISRSCTKWNVMVKSVEELPLRINEAFEIATSGRPGPVLVDLPKDVTAAILRNPIPTKTTLPSNALNQLTSRAQDEFVMQSINKAADLINLAKKPVLYVGAGILNHADGPRLLKELSDRAQIPVTTTLQGLGSFDQEDPKSLDMLGMHGCATANLAVQNADLIIAVGARFDDRVTGNISKFAPEARRAAAEGRGGIIHFEVSPKNINKVVQTQIAVEGDATTNLGKMMSKIFPVKERSEWFAQINKWKKEYPYAYMEETPGSKIKPQTVIKKLSKVANDTGRHVIVTTGVGQHQMWAAQHWTWRNPHTFITSGGLGTMGYGLPAAIGAQVAKPESLVIDIDGDASFNMTLTELSSAVQAGTPVKILILNNEEQGMVTQWQSLFYEHRYSHTHQLNPDFIKLAEAMGLKGLRVKKQEELDAKLKEFVSTKGPVLLEVEVDKKVPVLPMVAGGSGLDEFINFDPEVERQQTELRHKRTGGKH.

The N-terminal 90 residues, 1–90 (MIRQSTLKNF…AEPDMDTSFV (90 aa)), are a transit peptide targeting the mitochondrion. The span at 43–52 (YYSASPLPAS) shows a compositional bias: low complexity. A disordered region spans residues 43–68 (YYSASPLPASKRPEPAPSFNVDPLEQ). Position 139 (Glu-139) interacts with thiamine diphosphate. Residues Arg-241, 355–376 (HGCA…VGAR), and 407–426 (EVSP…VEGD) each bind FAD. The thiamine pyrophosphate binding stretch occupies residues 499 to 579 (QHQMWAAQHW…VKILILNNEE (81 aa)). Mg(2+) contacts are provided by Asp-550, Asn-577, and Glu-579.

Belongs to the TPP enzyme family. Homodimer. The acetolactate synthase complex contains the catalytic subunit ILV2 and the regulatory small subunit ILV6. Mg(2+) serves as cofactor. Thiamine diphosphate is required as a cofactor.

Its subcellular location is the mitochondrion. The catalysed reaction is 2 pyruvate + H(+) = (2S)-2-acetolactate + CO2. It carries out the reaction 2-oxobutanoate + pyruvate + H(+) = (S)-2-ethyl-2-hydroxy-3-oxobutanoate + CO2. Its pathway is amino-acid biosynthesis; L-isoleucine biosynthesis; L-isoleucine from 2-oxobutanoate: step 1/4. It participates in amino-acid biosynthesis; L-valine biosynthesis; L-valine from pyruvate: step 1/4. Its activity is regulated as follows. The regulatory subunit ILV6 stimulates enzymatic activity seven- to tenfold and confers sensitivity to inhibition by valine and activation by ATP. Functionally, catalytic subunit of mitochondrial acetolactate synthase, which catalyzes the first of a series of common steps in the biosynthesis of the branched-chain amino acids. Catalyzes the irreversible decarboxylation of pyruvate to a bound hydroxyethyl group that then condenses with either a second pyruvate molecule to form 2-acetolactate (AL) or with 2-ketobutyrate to form 2-aceto-2-hydroxybutyrate (AHB). The first product is the precursor for valine and leucine biosynthesis, while the second leads to isoleucine. The polypeptide is Acetolactate synthase catalytic subunit, mitochondrial (ILV2) (Saccharomyces cerevisiae (strain ATCC 204508 / S288c) (Baker's yeast)).